We begin with the raw amino-acid sequence, 205 residues long: Urease accessory protein UreG (205 aa).

11-18 (GPVGSGKT) contacts GTP.

It belongs to the SIMIBI class G3E GTPase family. UreG subfamily. In terms of assembly, homodimer. UreD, UreF and UreG form a complex that acts as a GTP-hydrolysis-dependent molecular chaperone, activating the urease apoprotein by helping to assemble the nickel containing metallocenter of UreC. The UreE protein probably delivers the nickel.

The protein resides in the cytoplasm. In terms of biological role, facilitates the functional incorporation of the urease nickel metallocenter. This process requires GTP hydrolysis, probably effectuated by UreG. This is Urease accessory protein UreG from Prochlorococcus marinus (strain NATL2A).